A 149-amino-acid chain; its full sequence is Large ribosomal subunit protein bL9 (149 aa).

It belongs to the bacterial ribosomal protein bL9 family.

Functionally, binds to the 23S rRNA. The sequence is that of Large ribosomal subunit protein bL9 from Syntrophus aciditrophicus (strain SB).